A 230-amino-acid chain; its full sequence is MTSPNGVFSHLTYFMAAGALSLGIGFFALASALWFLICKRRELFEESKFKEFGENMKQGSCKPKLKAHPQCVFISRNFHAGYLQSQTEKREKEEAEKKAVRSHSKVEFCLQDPISCESPEVTSVANGSSVSTLSLSTSISSSYCCQTVEEAEDWLTDDCLETRIPLKNPLLGEPLKKKVLAYLSSISLEEWPGNTVSNTFCSEQKTDSLKELLVLKNTEVGKHNLQFDIE.

The chain crosses the membrane as a helical span at residues 17 to 37; sequence AGALSLGIGFFALASALWFLI. Residue Asn-126 is glycosylated (N-linked (GlcNAc...) asparagine).

The protein resides in the membrane. This is an uncharacterized protein from Mus musculus (Mouse).